Here is a 649-residue protein sequence, read N- to C-terminus: WEB family protein At5g55860 (649 aa).

Coiled coils occupy residues 59 to 227 (EKVL…ACSQ), 267 to 356 (EFAK…IESV), and 391 to 461 (TINQ…MSEK). Residues 443–453 (EAKAAETKALE) show a composition bias toward basic and acidic residues. The interval 443 to 483 (EAKAAETKALEQIKSMSEKTNAARNSTSSESGSQSITLSQE) is disordered. A compositionally biased stretch (polar residues) spans 456–467 (KSMSEKTNAARN). The segment covering 468–482 (STSSESGSQSITLSQ) has biased composition (low complexity). Positions 505–549 (AALAQVEAVRASENETLKKLETTQEEIKKLKTATEEALKKAAMAD) form a coiled coil. The segment at 583–611 (MKMASESSPQQHYKAPKQKPVNNKLEKTK) is disordered.

It belongs to the WEB family.

This is WEB family protein At5g55860 from Arabidopsis thaliana (Mouse-ear cress).